The following is a 122-amino-acid chain: Large ribosomal subunit protein uL14 (122 aa).

It belongs to the universal ribosomal protein uL14 family. As to quaternary structure, part of the 50S ribosomal subunit. Forms a cluster with proteins L3 and L19. In the 70S ribosome, L14 and L19 interact and together make contacts with the 16S rRNA in bridges B5 and B8.

Functionally, binds to 23S rRNA. Forms part of two intersubunit bridges in the 70S ribosome. This chain is Large ribosomal subunit protein uL14, found in Lysinibacillus sphaericus (strain C3-41).